The primary structure comprises 493 residues: Transcription termination factor MTERF5, chloroplastic (493 aa).

The N-terminal 43 residues, Met-1–Arg-43, are a transit peptide targeting the chloroplast.

Belongs to the mTERF family. As to quaternary structure, interacts with pTAC6. Expressed in roots, rosette leaves, cauline leaves, stems, flower buds and open flowers.

It is found in the plastid. It localises to the chloroplast. Functionally, transcription termination factor required for processing and steady-state levels of plastid transcripts. Involved also in chloroplast transcriptional pausing, a general feature of chloroplast genes. Specifically and positively regulates the transcription of chloroplast psbEFLJ encoding for photosystem II (PSII) core subunits psbE, psbF, psbL and psbJ; causes the plastid-encoded RNA polymerase (PEP) complex to pause at psbEFLJ by binding to the +30 to +51 region of double-stranded DNA, and recruits additional pTAC6 to the transcriptionally paused region of psbEFLJ. May play a role in response to abiotic stresses. This chain is Transcription termination factor MTERF5, chloroplastic, found in Arabidopsis thaliana (Mouse-ear cress).